The primary structure comprises 323 residues: Melanocortin receptor 3 (323 aa).

The Extracellular portion of the chain corresponds to 1-37; it reads MNSSCCPSSSYPTLPNLSQHPAAPSASNRSGSGFCEQ. Residues N2, N16, and N28 are each glycosylated (N-linked (GlcNAc...) asparagine). A helical membrane pass occupies residues 38–63; the sequence is VFIKPEVFLALGIVSLMENILVILAV. Residues 64–75 lie on the Cytoplasmic side of the membrane; the sequence is VRNGNLHSPMYF. The helical transmembrane segment at 76–100 threads the bilayer; it reads FLCSLAAADMLVSLSNSLETIMIVV. Over 101 to 118 the chain is Extracellular; the sequence is INSDSLTLEDQFIQHMDN. The helical transmembrane segment at 119-140 threads the bilayer; it reads IFDSMICISLVASICNLLAIAV. The Cytoplasmic portion of the chain corresponds to 141 to 160; sequence DRYVTIFYALRYHSIMTVRK. A helical transmembrane segment spans residues 161–181; it reads ALSLIVAIWVCCGICGVMFIV. The Extracellular segment spans residues 182–186; that stretch reads YSESK. A helical membrane pass occupies residues 187–210; that stretch reads MVIVCLITMFFAMVLLMGTLYIHM. At 211–245 the chain is on the cytoplasmic side; that stretch reads FLFARLHVQRIAALPPADGVAPQQHSCMKGAVTIT. A helical membrane pass occupies residues 246–268; the sequence is ILLGVFIFCWAPFFLHLVLIITC. Over 269–277 the chain is Extracellular; sequence PTNPYCICY. The chain crosses the membrane as a helical span at residues 278 to 301; it reads TAHFNTYLVLIMCNSVIDPLIYAF. The Cytoplasmic portion of the chain corresponds to 302-323; the sequence is RSLELRNTFKEILCGCNGMNVG. C315 carries the S-palmitoyl cysteine lipid modification.

The protein belongs to the G-protein coupled receptor 1 family. In terms of tissue distribution, brain.

It is found in the cell membrane. Its function is as follows. Receptor for MSH (alpha, beta and gamma) and ACTH. This receptor is mediated by G proteins which activate adenylate cyclase. Required for expression of anticipatory patterns of activity and wakefulness during periods of limited nutrient availability and for the normal regulation of circadian clock activity in the brain. This is Melanocortin receptor 3 (Mc3r) from Rattus norvegicus (Rat).